Reading from the N-terminus, the 339-residue chain is Heat-inducible transcription repressor HrcA (339 aa).

The protein belongs to the HrcA family.

In terms of biological role, negative regulator of class I heat shock genes (grpE-dnaK-dnaJ and groELS operons). Prevents heat-shock induction of these operons. The polypeptide is Heat-inducible transcription repressor HrcA (Thermotoga neapolitana (strain ATCC 49049 / DSM 4359 / NBRC 107923 / NS-E)).